Consider the following 159-residue polypeptide: NAD(P)H-quinone oxidoreductase subunit J, chloroplastic (159 aa).

Belongs to the complex I 30 kDa subunit family. As to quaternary structure, NDH is composed of at least 16 different subunits, 5 of which are encoded in the nucleus.

It localises to the plastid. Its subcellular location is the chloroplast thylakoid membrane. It catalyses the reaction a plastoquinone + NADH + (n+1) H(+)(in) = a plastoquinol + NAD(+) + n H(+)(out). The enzyme catalyses a plastoquinone + NADPH + (n+1) H(+)(in) = a plastoquinol + NADP(+) + n H(+)(out). NDH shuttles electrons from NAD(P)H:plastoquinone, via FMN and iron-sulfur (Fe-S) centers, to quinones in the photosynthetic chain and possibly in a chloroplast respiratory chain. The immediate electron acceptor for the enzyme in this species is believed to be plastoquinone. Couples the redox reaction to proton translocation, and thus conserves the redox energy in a proton gradient. This Triticum aestivum (Wheat) protein is NAD(P)H-quinone oxidoreductase subunit J, chloroplastic.